A 331-amino-acid chain; its full sequence is Ketol-acid reductoisomerase (NADP(+)) (331 aa).

The KARI N-terminal Rossmann domain occupies 2-182 (AQLFYDSDAD…GGTRAGILET (181 aa)). NADP(+) is bound by residues 25-28 (YGSQ), S51, S53, and 83-86 (DEFQ). H108 is an active-site residue. G134 contacts NADP(+). The KARI C-terminal knotted domain occupies 183 to 328 (NFKEETETDL…KGLRSMFSWL (146 aa)). Mg(2+) is bound by residues D191, E195, E227, and E231. A substrate-binding site is contributed by S252.

Belongs to the ketol-acid reductoisomerase family. The cofactor is Mg(2+).

It carries out the reaction (2R)-2,3-dihydroxy-3-methylbutanoate + NADP(+) = (2S)-2-acetolactate + NADPH + H(+). The enzyme catalyses (2R,3R)-2,3-dihydroxy-3-methylpentanoate + NADP(+) = (S)-2-ethyl-2-hydroxy-3-oxobutanoate + NADPH + H(+). Its pathway is amino-acid biosynthesis; L-isoleucine biosynthesis; L-isoleucine from 2-oxobutanoate: step 2/4. It functions in the pathway amino-acid biosynthesis; L-valine biosynthesis; L-valine from pyruvate: step 2/4. Its function is as follows. Involved in the biosynthesis of branched-chain amino acids (BCAA). Catalyzes an alkyl-migration followed by a ketol-acid reduction of (S)-2-acetolactate (S2AL) to yield (R)-2,3-dihydroxy-isovalerate. In the isomerase reaction, S2AL is rearranged via a Mg-dependent methyl migration to produce 3-hydroxy-3-methyl-2-ketobutyrate (HMKB). In the reductase reaction, this 2-ketoacid undergoes a metal-dependent reduction by NADPH to yield (R)-2,3-dihydroxy-isovalerate. The sequence is that of Ketol-acid reductoisomerase (NADP(+)) from Synechococcus sp. (strain CC9902).